Reading from the N-terminus, the 336-residue chain is Phospho-N-acetylmuramoyl-pentapeptide-transferase (336 aa).

A run of 10 helical transmembrane segments spans residues Leu3–Ile23, Gly53–Ile73, Ser78–Leu98, Leu118–Ile138, Val143–Val163, Gly174–Ala194, Phe200–Asn220, Val226–Ala246, Trp251–Val271, and Ala316–Phe336.

Belongs to the glycosyltransferase 4 family. MraY subfamily. Mg(2+) serves as cofactor.

It is found in the cell membrane. It carries out the reaction UDP-N-acetyl-alpha-D-muramoyl-L-alanyl-gamma-D-glutamyl-L-lysyl-D-alanyl-D-alanine + di-trans,octa-cis-undecaprenyl phosphate = Mur2Ac(oyl-L-Ala-gamma-D-Glu-L-Lys-D-Ala-D-Ala)-di-trans,octa-cis-undecaprenyl diphosphate + UMP. The protein operates within cell wall biogenesis; peptidoglycan biosynthesis. Its function is as follows. Catalyzes the initial step of the lipid cycle reactions in the biosynthesis of the cell wall peptidoglycan: transfers peptidoglycan precursor phospho-MurNAc-pentapeptide from UDP-MurNAc-pentapeptide onto the lipid carrier undecaprenyl phosphate, yielding undecaprenyl-pyrophosphoryl-MurNAc-pentapeptide, known as lipid I. The protein is Phospho-N-acetylmuramoyl-pentapeptide-transferase of Streptococcus pyogenes serotype M4 (strain MGAS10750).